The sequence spans 85 residues: uncharacterized protein (85 aa).

Belongs to the ycf76 family.

The protein resides in the plastid. It localises to the chloroplast. This is an uncharacterized protein from Saccharum hybrid (Sugarcane).